The primary structure comprises 62 residues: Synergistic-type venom protein C8S2, chain 2 (62 aa).

Intrachain disulfides connect Cys-3-Cys-24, Cys-17-Cys-42, and Cys-46-Cys-57.

It belongs to the three-finger toxin family. Short-chain subfamily. Aminergic toxin sub-subfamily. As to quaternary structure, heterodimer of C8S2 chain 1 (AC P01410) and chain 2; disulfide-linked. In terms of tissue distribution, expressed by the venom gland.

The protein resides in the secreted. Its function is as follows. This protein shows a synergetic toxic effect in that it enhances the toxicity of other toxins. In Dendroaspis angusticeps (Eastern green mamba), this protein is Synergistic-type venom protein C8S2, chain 2.